Here is a 174-residue protein sequence, read N- to C-terminus: Large ribosomal subunit protein uL5 (174 aa).

Belongs to the universal ribosomal protein uL5 family. Part of the 50S ribosomal subunit; contacts the 5S rRNA and probably tRNA. Forms a bridge to the 30S subunit in the 70S ribosome.

In terms of biological role, this is one of the proteins that bind and probably mediate the attachment of the 5S RNA into the large ribosomal subunit, where it forms part of the central protuberance. In the 70S ribosome it contacts protein S13 of the 30S subunit (bridge B1b), connecting the 2 subunits; this bridge is implicated in subunit movement. May contact the P site tRNA; the 5S rRNA and some of its associated proteins might help stabilize positioning of ribosome-bound tRNAs. The protein is Large ribosomal subunit protein uL5 of Halorubrum lacusprofundi (strain ATCC 49239 / DSM 5036 / JCM 8891 / ACAM 34).